Here is a 243-residue protein sequence, read N- to C-terminus: Protein YagJ (243 aa).

This is Protein YagJ (yagJ) from Escherichia coli (strain K12).